Reading from the N-terminus, the 458-residue chain is Probable plasmid replicative DNA helicase (458 aa).

The 265-residue stretch at 194–458 folds into the SF4 helicase domain; the sequence is KIDYVDGLPT…GKFTIQKEAW (265 aa). 225-232 provides a ligand contact to ATP; it reads ARPAMGKT.

This sequence belongs to the helicase family. DnaB subfamily. As to quaternary structure, homohexamer.

It catalyses the reaction Couples ATP hydrolysis with the unwinding of duplex DNA at the replication fork by translocating in the 5'-3' direction. This creates two antiparallel DNA single strands (ssDNA). The leading ssDNA polymer is the template for DNA polymerase III holoenzyme which synthesizes a continuous strand.. It carries out the reaction ATP + H2O = ADP + phosphate + H(+). In terms of biological role, a replicative DNA helicase, it participates in initiation and elongation during DNA replication. Travels ahead of the DNA replisome, separating dsDNA into templates for DNA synthesis. A processive ATP-dependent 5'-3' DNA helicase it has DNA-dependent ATPase activity. In Chlamydia psittaci (Chlamydophila psittaci), this protein is Probable plasmid replicative DNA helicase.